Consider the following 333-residue polypeptide: Cell shape-determining protein Mbl (333 aa).

ATP contacts are provided by residues T12 to N14, G156 to T158, E204 to K207, and G284 to L287.

It belongs to the FtsA/MreB family. Forms polymers.

Its subcellular location is the cytoplasm. Functionally, forms membrane-associated dynamic filaments that are essential for cell shape determination. Acts by regulating cell wall synthesis and cell elongation, and thus cell shape. A feedback loop between cell geometry and Mbl localization may maintain elongated cell shape by targeting cell wall growth to regions of negative cell wall curvature. The protein is Cell shape-determining protein Mbl of Bacillus cereus (strain ATCC 10987 / NRS 248).